The chain runs to 195 residues: uncharacterized protein (195 aa).

Residues 1–16 form the signal peptide; sequence MIRTIIVFMLLTISFG.

This is an uncharacterized protein from Acanthamoeba polyphaga mimivirus (APMV).